We begin with the raw amino-acid sequence, 430 residues long: MASLKIKYAAIIISSLIAGGLISVTAWQYLNSSQKTVPAEQKAPEKKVLFWYDPMKPDTKFDKPGKSPFMDMDLVPKYADESGDKSSGGIRIDPTQVQNLGLKTQKVTRGMLNYSQTIPANVSYNEYQFVIVQARSDGFVEKVYPLTIGDHVKKGTPLIDITIPEWVEAQSEFLLLSGTGGTPTQIKGVLERLRLAGMPEEDIQRLRSTRTIQTRFTIKAPIDGVITAFDLRTGMNISKDKVVAQIQGMDPVWISAAVPESIAYLLKDTSQFEISVPAYPDKTFHVEKWNILPSVDQTTRTLQVRLQVTNKDEFLKPGMNAYLKLNTQSQEMLLIPSQAVIDTGKEQRVITVDDEGKFVPKQIHVLHESQQQSGIGSGLNEGDTVVVSGLFLIDSEANITGALERMRHPEKTENSMPAMSEQPVNMHSGH.

The first 28 residues, 1–28, serve as a signal peptide directing secretion; that stretch reads MASLKIKYAAIIISSLIAGGLISVTAWQ. Residues 407–430 form a disordered region; the sequence is RHPEKTENSMPAMSEQPVNMHSGH. Polar residues predominate over residues 414–430; that stretch reads NSMPAMSEQPVNMHSGH.

This sequence belongs to the membrane fusion protein (MFP) (TC 8.A.1) family.

Its function is as follows. Component of the sil cation efflux system that confers resistance to silver. May be part of a three-component cation/proton antiporter. The chain is Putative membrane fusion protein SilB (silB) from Salmonella typhimurium.